The chain runs to 417 residues: Putative F-box protein At4g21240 (417 aa).

Residues 1-12 (MDRREEEEEETG) are compositionally biased toward acidic residues. The tract at residues 1 to 25 (MDRREEEEEETGYGEKGTRNQSKED) is disordered. Residues 16–25 (KGTRNQSKED) are compositionally biased toward basic and acidic residues. In terms of domain architecture, F-box spans 30 to 76 (GKIFELIPLDMIPDILLRLPAKSAVRFRIVSKLWLSITTRPYFIRSF).

This chain is Putative F-box protein At4g21240, found in Arabidopsis thaliana (Mouse-ear cress).